The chain runs to 71 residues: Phenoloxidase 3 (71 aa).

Positions 3 and 29 each coordinate Cu cation.

It belongs to the tyrosinase family. Requires Cu(2+) as cofactor. Post-translationally, upon activation, a trypsin type protease cleaves prophenol oxidase to yield the active enzyme. As to expression, hemocytes and plasma.

The protein localises to the secreted. It carries out the reaction 2 L-dopa + O2 = 2 L-dopaquinone + 2 H2O. The catalysed reaction is L-tyrosine + O2 = L-dopaquinone + H2O. Its function is as follows. This is a copper-containing oxidase that functions in the formation of pigments such as melanins and other polyphenolic compounds. Catalyzes the rate-limiting conversions of tyrosine to DOPA, DOPA to DOPA-quinone and possibly 5,6 dihydroxyindole to indole-5'6 quinone. In Sarcophaga argyrostoma (Flesh fly), this protein is Phenoloxidase 3.